The sequence spans 564 residues: Isocitrate dehydrogenase kinase/phosphatase (564 aa).

Residues Ala-315–Met-321 and Lys-336 contribute to the ATP site. Asp-371 is a catalytic residue.

It belongs to the AceK family.

It is found in the cytoplasm. The enzyme catalyses L-seryl-[isocitrate dehydrogenase] + ATP = O-phospho-L-seryl-[isocitrate dehydrogenase] + ADP + H(+). In terms of biological role, bifunctional enzyme which can phosphorylate or dephosphorylate isocitrate dehydrogenase (IDH) on a specific serine residue. This is a regulatory mechanism which enables bacteria to bypass the Krebs cycle via the glyoxylate shunt in response to the source of carbon. When bacteria are grown on glucose, IDH is fully active and unphosphorylated, but when grown on acetate or ethanol, the activity of IDH declines drastically concomitant with its phosphorylation. In Idiomarina loihiensis (strain ATCC BAA-735 / DSM 15497 / L2-TR), this protein is Isocitrate dehydrogenase kinase/phosphatase.